Here is a 488-residue protein sequence, read N- to C-terminus: UDP-N-acetylmuramate--L-alanine ligase (488 aa).

Residue 129-135 (GSHGKTT) coordinates ATP.

This sequence belongs to the MurCDEF family.

The protein resides in the cytoplasm. The enzyme catalyses UDP-N-acetyl-alpha-D-muramate + L-alanine + ATP = UDP-N-acetyl-alpha-D-muramoyl-L-alanine + ADP + phosphate + H(+). The protein operates within cell wall biogenesis; peptidoglycan biosynthesis. Cell wall formation. This is UDP-N-acetylmuramate--L-alanine ligase from Prochlorococcus marinus (strain MIT 9313).